The chain runs to 402 residues: Leucine aminopeptidase 1 (402 aa).

Positions 1-18 (MKISNASLLALLLPAASA) are cleaved as a signal peptide. The propeptide occupies 19 to 92 (RFVEQAEQNR…GTFNKRPYKK (74 aa)). N111 and N184 each carry an N-linked (GlcNAc...) asparagine glycan. Positions 192, 211, 250, and 277 each coordinate Zn(2+). The N-linked (GlcNAc...) asparagine glycan is linked to N304. C326 and C330 are disulfide-bonded. Zn(2+) is bound at residue H359.

This sequence belongs to the peptidase M28 family. M28E subfamily. As to quaternary structure, monomer. Zn(2+) serves as cofactor.

It localises to the secreted. Its function is as follows. Extracellular aminopeptidase that allows assimilation of proteinaceous substrates. This is Leucine aminopeptidase 1 (lap1) from Neurospora crassa (strain ATCC 24698 / 74-OR23-1A / CBS 708.71 / DSM 1257 / FGSC 987).